The primary structure comprises 206 residues: Large ribosomal subunit protein uL13y (206 aa).

It belongs to the universal ribosomal protein uL13 family.

The sequence is that of Large ribosomal subunit protein uL13y (RPL13AB) from Arabidopsis thaliana (Mouse-ear cress).